The chain runs to 301 residues: uncharacterized protein (301 aa).

One can recognise an HTH lysR-type domain in the interval 1–58; it reads MDIRHLTYFLEVARLKSFTKASQSLYVSQPTISKMIKNLEEELGIELFYRNGRQVELT. A DNA-binding region (H-T-H motif) is located at residues 18-37; the sequence is FTKASQSLYVSQPTISKMIK.

This sequence belongs to the LysR transcriptional regulatory family.

This is an uncharacterized protein from Bacillus subtilis (strain 168).